The sequence spans 388 residues: Formate-dependent phosphoribosylglycinamide formyltransferase (388 aa).

N(1)-(5-phospho-beta-D-ribosyl)glycinamide is bound by residues 20 to 21 and Glu80; that span reads EL. Residues Arg112, Lys153, 158–163, 193–196, and Glu201 each bind ATP; these read SSGKGQ and EEFI. An ATP-grasp domain is found at 117-306; sequence RLAFEKLGLR…EFEIHARAIL (190 aa). Positions 265 and 277 each coordinate Mg(2+). N(1)-(5-phospho-beta-D-ribosyl)glycinamide contacts are provided by residues Asp284, Lys352, and 359 to 360; that span reads RR.

The protein belongs to the PurK/PurT family. In terms of assembly, homodimer.

The catalysed reaction is N(1)-(5-phospho-beta-D-ribosyl)glycinamide + formate + ATP = N(2)-formyl-N(1)-(5-phospho-beta-D-ribosyl)glycinamide + ADP + phosphate + H(+). Its pathway is purine metabolism; IMP biosynthesis via de novo pathway; N(2)-formyl-N(1)-(5-phospho-D-ribosyl)glycinamide from N(1)-(5-phospho-D-ribosyl)glycinamide (formate route): step 1/1. Involved in the de novo purine biosynthesis. Catalyzes the transfer of formate to 5-phospho-ribosyl-glycinamide (GAR), producing 5-phospho-ribosyl-N-formylglycinamide (FGAR). Formate is provided by PurU via hydrolysis of 10-formyl-tetrahydrofolate. The sequence is that of Formate-dependent phosphoribosylglycinamide formyltransferase from Methanococcus maripaludis (strain C7 / ATCC BAA-1331).